The primary structure comprises 322 residues: NADH-quinone oxidoreductase subunit H (322 aa).

The next 8 helical transmembrane spans lie at 14 to 34, 81 to 101, 114 to 134, 149 to 169, 186 to 206, 237 to 257, 265 to 285, and 302 to 322; these read IFMH…YMSF, YIFV…IPVI, VGVL…LLAG, SIAQ…GIVA, LWNI…GMAL, FFIS…TLFF, FPPV…FVLI, and WKFL…YILI.

The protein belongs to the complex I subunit 1 family. As to quaternary structure, NDH-1 is composed of 13 different subunits. Subunits NuoA, H, J, K, L, M, N constitute the membrane sector of the complex.

It localises to the cell inner membrane. It catalyses the reaction a quinone + NADH + 5 H(+)(in) = a quinol + NAD(+) + 4 H(+)(out). Its function is as follows. NDH-1 shuttles electrons from NADH, via FMN and iron-sulfur (Fe-S) centers, to quinones in the respiratory chain. The immediate electron acceptor for the enzyme in this species is believed to be ubiquinone. Couples the redox reaction to proton translocation (for every two electrons transferred, four hydrogen ions are translocated across the cytoplasmic membrane), and thus conserves the redox energy in a proton gradient. This subunit may bind ubiquinone. This Blochmanniella floridana protein is NADH-quinone oxidoreductase subunit H.